We begin with the raw amino-acid sequence, 315 residues long: Ester hydrolase C11orf54 homolog (315 aa).

Residues His-266, His-268, and His-278 each contribute to the Zn(2+) site.

Monomer. It depends on Zn(2+) as a cofactor.

It localises to the nucleus. Its subcellular location is the cytoplasm. Its function is as follows. Exhibits ester hydrolase activity on the substrate p-nitrophenyl acetate, in vitro. Regulates DNA damage and repair by regulating HIF1A degradation via chaperone-mediated autophagy (CMA). This Rattus norvegicus (Rat) protein is Ester hydrolase C11orf54 homolog.